Consider the following 72-residue polypeptide: Translation initiation factor IF-1 (72 aa).

The S1-like domain maps to 1 to 72 (MAKEDNFELE…SKGRITYRAR (72 aa)).

Belongs to the IF-1 family. Component of the 30S ribosomal translation pre-initiation complex which assembles on the 30S ribosome in the order IF-2 and IF-3, IF-1 and N-formylmethionyl-tRNA(fMet); mRNA recruitment can occur at any time during PIC assembly.

The protein resides in the cytoplasm. In terms of biological role, one of the essential components for the initiation of protein synthesis. Stabilizes the binding of IF-2 and IF-3 on the 30S subunit to which N-formylmethionyl-tRNA(fMet) subsequently binds. Helps modulate mRNA selection, yielding the 30S pre-initiation complex (PIC). Upon addition of the 50S ribosomal subunit IF-1, IF-2 and IF-3 are released leaving the mature 70S translation initiation complex. The sequence is that of Translation initiation factor IF-1 from Saccharophagus degradans (strain 2-40 / ATCC 43961 / DSM 17024).